Here is a 65-residue protein sequence, read N- to C-terminus: Large ribosomal subunit protein bL33c (65 aa).

The protein belongs to the bacterial ribosomal protein bL33 family.

It localises to the plastid. The protein resides in the chloroplast. This Zygnema circumcarinatum (Green alga) protein is Large ribosomal subunit protein bL33c.